The chain runs to 296 residues: Tyrosine recombinase XerC (296 aa).

The Core-binding (CB) domain occupies 2–85; the sequence is ADQASWLERF…ALKQFGQFLL (84 aa). In terms of domain architecture, Tyr recombinase spans 106–285; it reads TLPKNLDPDS…DFQHLAKVYD (180 aa). Active-site residues include Arg145, Lys169, His237, Arg240, and His263. Catalysis depends on Tyr272, which acts as the O-(3'-phospho-DNA)-tyrosine intermediate.

This sequence belongs to the 'phage' integrase family. XerC subfamily. As to quaternary structure, forms a cyclic heterotetrameric complex composed of two molecules of XerC and two molecules of XerD.

The protein resides in the cytoplasm. Its function is as follows. Site-specific tyrosine recombinase, which acts by catalyzing the cutting and rejoining of the recombining DNA molecules. The XerC-XerD complex is essential to convert dimers of the bacterial chromosome into monomers to permit their segregation at cell division. It also contributes to the segregational stability of plasmids. The sequence is that of Tyrosine recombinase XerC from Shewanella amazonensis (strain ATCC BAA-1098 / SB2B).